The following is a 374-amino-acid chain: Pectate lyase 3 (374 aa).

The signal sequence occupies residues 1–22; sequence MKYLLPSTAAGLLLLAAQPTMA. A disulfide bond links Cys-93 and Cys-176. 4 residues coordinate Ca(2+): Asp-150, Asp-152, Glu-187, and Asp-191. Residue Arg-239 is part of the active site. Cys-350 and Cys-373 are oxidised to a cystine.

The protein belongs to the polysaccharide lyase 1 family. PLADES subfamily. Ca(2+) serves as cofactor.

Its subcellular location is the secreted. It catalyses the reaction Eliminative cleavage of (1-&gt;4)-alpha-D-galacturonan to give oligosaccharides with 4-deoxy-alpha-D-galact-4-enuronosyl groups at their non-reducing ends.. The protein operates within glycan metabolism; pectin degradation; 2-dehydro-3-deoxy-D-gluconate from pectin: step 2/5. Its function is as follows. Involved in maceration and soft-rotting of plant tissue. This chain is Pectate lyase 3 (pel3), found in Pectobacterium atrosepticum (strain SCRI 1043 / ATCC BAA-672) (Erwinia carotovora subsp. atroseptica).